A 213-amino-acid polypeptide reads, in one-letter code: Peptidyl-tRNA hydrolase (213 aa).

Y26 is a binding site for tRNA. H31 functions as the Proton acceptor in the catalytic mechanism. Y78, N80, and N126 together coordinate tRNA.

It belongs to the PTH family. In terms of assembly, monomer.

Its subcellular location is the cytoplasm. The catalysed reaction is an N-acyl-L-alpha-aminoacyl-tRNA + H2O = an N-acyl-L-amino acid + a tRNA + H(+). In terms of biological role, hydrolyzes ribosome-free peptidyl-tRNAs (with 1 or more amino acids incorporated), which drop off the ribosome during protein synthesis, or as a result of ribosome stalling. Its function is as follows. Catalyzes the release of premature peptidyl moieties from peptidyl-tRNA molecules trapped in stalled 50S ribosomal subunits, and thus maintains levels of free tRNAs and 50S ribosomes. The chain is Peptidyl-tRNA hydrolase from Trichormus variabilis (strain ATCC 29413 / PCC 7937) (Anabaena variabilis).